The primary structure comprises 352 residues: Phosphoribosylformylglycinamidine cyclo-ligase (352 aa).

The protein belongs to the AIR synthase family.

It localises to the cytoplasm. It carries out the reaction 2-formamido-N(1)-(5-O-phospho-beta-D-ribosyl)acetamidine + ATP = 5-amino-1-(5-phospho-beta-D-ribosyl)imidazole + ADP + phosphate + H(+). It participates in purine metabolism; IMP biosynthesis via de novo pathway; 5-amino-1-(5-phospho-D-ribosyl)imidazole from N(2)-formyl-N(1)-(5-phospho-D-ribosyl)glycinamide: step 2/2. This is Phosphoribosylformylglycinamidine cyclo-ligase from Hahella chejuensis (strain KCTC 2396).